We begin with the raw amino-acid sequence, 56 residues long: uncharacterized protein (56 aa).

This is an uncharacterized protein from Bacillus subtilis (strain 168).